The primary structure comprises 296 residues: 4-hydroxy-tetrahydrodipicolinate synthase (296 aa).

A pyruvate-binding site is contributed by Thr49. Tyr137 serves as the catalytic Proton donor/acceptor. The Schiff-base intermediate with substrate role is filled by Lys166. Pyruvate is bound at residue Ile208.

The protein belongs to the DapA family. Homotetramer; dimer of dimers.

It is found in the cytoplasm. It catalyses the reaction L-aspartate 4-semialdehyde + pyruvate = (2S,4S)-4-hydroxy-2,3,4,5-tetrahydrodipicolinate + H2O + H(+). The protein operates within amino-acid biosynthesis; L-lysine biosynthesis via DAP pathway; (S)-tetrahydrodipicolinate from L-aspartate: step 3/4. Catalyzes the condensation of (S)-aspartate-beta-semialdehyde [(S)-ASA] and pyruvate to 4-hydroxy-tetrahydrodipicolinate (HTPA). This Pelodictyon phaeoclathratiforme (strain DSM 5477 / BU-1) protein is 4-hydroxy-tetrahydrodipicolinate synthase.